Here is a 243-residue protein sequence, read N- to C-terminus: MRTPTGDLSDGPAEELGRDQPVFGPEIGEFEHSERRAAQADGEGEMKTGTTTVGIKTADGVVMATDMRASLGGMVSSKDVQKVEEVHPRGALTIAGSVSAAQNLISTLKAETSLYETRRGKDMSMEALSTLTGNLLRSGAFYIVQPILGGVDDEGSHIYSIDALGGTTEEEYTVTGSGSQYALGVLEQEYDDDVTVDEAKTMAAKAIQSAVERDLASGNGINVAVVTDDGVDITRYKDFDDLL.

Residues 1–49 (MRTPTGDLSDGPAEELGRDQPVFGPEIGEFEHSERRAAQADGEGEMKTG) constitute a propeptide, removed in mature form; by autocatalysis. The interval 1–50 (MRTPTGDLSDGPAEELGRDQPVFGPEIGEFEHSERRAAQADGEGEMKTGT) is disordered. Positions 29 to 38 (EFEHSERRAA) are enriched in basic and acidic residues. The active-site Nucleophile is the threonine 50.

It belongs to the peptidase T1B family. In terms of assembly, the 20S proteasome core is composed of 14 alpha and 14 beta subunits that assemble into four stacked heptameric rings, resulting in a barrel-shaped structure. The two inner rings, each composed of seven catalytic beta subunits, are sandwiched by two outer rings, each composed of seven alpha subunits. The catalytic chamber with the active sites is on the inside of the barrel. Has a gated structure, the ends of the cylinder being occluded by the N-termini of the alpha-subunits. Is capped at one or both ends by the proteasome regulatory ATPase, PAN.

It is found in the cytoplasm. It carries out the reaction Cleavage of peptide bonds with very broad specificity.. The formation of the proteasomal ATPase PAN-20S proteasome complex, via the docking of the C-termini of PAN into the intersubunit pockets in the alpha-rings, triggers opening of the gate for substrate entry. Interconversion between the open-gate and close-gate conformations leads to a dynamic regulation of the 20S proteasome proteolysis activity. In terms of biological role, component of the proteasome core, a large protease complex with broad specificity involved in protein degradation. The sequence is that of Proteasome subunit beta from Halorubrum lacusprofundi (strain ATCC 49239 / DSM 5036 / JCM 8891 / ACAM 34).